A 292-amino-acid polypeptide reads, in one-letter code: Ribosomal RNA small subunit methyltransferase A (292 aa).

S-adenosyl-L-methionine contacts are provided by Asn-28, Leu-30, Gly-55, Glu-76, Asp-101, and Asn-126.

Belongs to the class I-like SAM-binding methyltransferase superfamily. rRNA adenine N(6)-methyltransferase family. RsmA subfamily.

It is found in the cytoplasm. It catalyses the reaction adenosine(1518)/adenosine(1519) in 16S rRNA + 4 S-adenosyl-L-methionine = N(6)-dimethyladenosine(1518)/N(6)-dimethyladenosine(1519) in 16S rRNA + 4 S-adenosyl-L-homocysteine + 4 H(+). Its function is as follows. Specifically dimethylates two adjacent adenosines (A1518 and A1519) in the loop of a conserved hairpin near the 3'-end of 16S rRNA in the 30S particle. May play a critical role in biogenesis of 30S subunits. This is Ribosomal RNA small subunit methyltransferase A from Bacillus cytotoxicus (strain DSM 22905 / CIP 110041 / 391-98 / NVH 391-98).